The primary structure comprises 1097 residues: Protein toll (1097 aa).

Positions Met-1–Ala-27 are cleaved as a signal peptide. At Ser-28–Ile-807 the chain is on the extracellular side. Cystine bridges form between Cys-34/Cys-45, Cys-43/Cys-56, and Cys-79/Cys-107. Asn-80, Asn-140, and Asn-175 each carry an N-linked (GlcNAc...) asparagine glycan. LRR repeat units lie at residues Asn-175 to Asp-195, Asn-198 to Lys-219, Lys-222 to Gly-243, Ser-246 to His-267, Asn-270 to His-291, His-294 to Leu-314, Glu-320 to His-340, Gln-343 to His-364, Asn-367 to His-388, Asn-391 to Asn-412, Asn-415 to Ser-436, Gly-439 to Met-460, Gly-474 to Thr-495, Gln-498 to Ser-521, and Asn-523 to His-544. The N-linked (GlcNAc...) asparagine glycan is linked to Asn-235. Residues Asn-270 and Asn-275 are each glycosylated (N-linked (GlcNAc...) asparagine). An N-linked (GlcNAc...) asparagine glycan is attached at Asn-346. N-linked (GlcNAc...) asparagine glycosylation occurs at Asn-391. N-linked (GlcNAc...) asparagine glycans are attached at residues Asn-482, Asn-508, and Asn-528. The 60-residue stretch at Asn-561–Leu-620 folds into the LRRCT 1 domain. Disulfide bonds link Cys-565-Cys-597, Cys-567-Cys-618, Cys-631-Cys-637, and Cys-635-Cys-650. The region spanning Phe-622–Asn-663 is the LRRNT domain. N-linked (GlcNAc...) asparagine glycosylation is found at Asn-654, Asn-677, Asn-703, Asn-715, Asn-730, and Asn-738. LRR repeat units follow at residues Gln-669–Gly-690, Ser-693–Pro-713, and Asn-715–Asn-738. One can recognise an LRRCT 2 domain in the interval Asn-751 to Ala-801. Intrachain disulfides connect Cys-755–Cys-781 and Cys-757–Cys-799. A helical transmembrane segment spans residues Ala-808–Tyr-828. The Cytoplasmic portion of the chain corresponds to Lys-829–Val-1097. Residues Lys-857–Leu-993 form the TIR domain.

The protein belongs to the Toll-like receptor family. In terms of assembly, in the absence of ligand, forms a low-affinity disulfide-linked homodimer. In the presence of ligand, crystal structures show one Tl molecule bound to a spaetzle C-106 homodimer. However, the active complex probably consists of two Tl molecules bound to a spaetzle C-106 homodimer. This is supported by in vitro experiments which also show binding of the spaetzle C-106 dimer to 2 Tl receptors. Ligand binding induces conformational changes in the extracellular domain of Tl. This may enable a secondary homodimerization interface at the C-terminus of the Tl extracellular domain. In early embryos, concentrated in the pseudocleavage furrows that form transiently between nuclei before cellularization and in the cleavage furrows during cellularization (at protein level). Later, found on cells in the mesectoderm, stomodeum, proctodeum, anterior and posterior midguts, splanchnopleura, salivary gland placode and adjacent to the segmentally repeated tracheal placodes (at protein level). During and after germ band shortening, localized in a number of cell types, including the salivary gland, foregut, hindgut, Malpighian tubules and epidermis (at protein level). In embryos, high expression in M13 with comparatively low expression in M12.

Its subcellular location is the cell membrane. The protein localises to the cytoplasm. In terms of biological role, receptor for the cleaved activated form of spz, spaetzle C-106. Binding to spaetzle C-106 activates the Toll signaling pathway and induces expression of the antifungal peptide drosomycin. Component of the extracellular signaling pathway that establishes dorsal-ventral polarity in the embryo. Promotes heterophilic cellular adhesion. Involved in synaptic targeting of motoneurons RP5 and V to muscle 12 (M12); functions as a repulsive cue inhibiting motoneuron synapse formation on muscle 13 (M13) to guide RP5 and V to the neighboring M12, where its expression is repressed by tey. May also function in embryonic neuronal survival and the synaptic targeting of SNa motoneurons. The polypeptide is Protein toll (Drosophila melanogaster (Fruit fly)).